The chain runs to 270 residues: Transcriptional regulator BrlR (270 aa).

A 3',3'-c-di-GMP-binding site is contributed by methionine 1. Residues methionine 1–aspartate 71 enclose the HTH merR-type domain. The H-T-H motif DNA-binding region spans isoleucine 4–alanine 23. 3',3'-c-di-GMP-binding residues include arginine 31, serine 34, aspartate 35, tyrosine 40, arginine 67, arginine 70, arginine 86, and tyrosine 270. An involved in effector-binding, probably including pyocyanine-binding region spans residues methionine 120 to tyrosine 270.

As to quaternary structure, monomer. Homodimer; dimer formation enhanced in the presence of the second messenger, cyclic di-GMP (c-di-GMP). Homotetramer; dimer of dimers, arranged in a head-to-tail fashion, which may reduce DNA-binding ability. Conformational changes upon binding c-di-GMP or pyocyanine may facilitate DNA binding.

Functionally, transcriptional regulator. Responsive to the second messenger cyclic di-GMP (c-di-GMP) and to the virulence factor pyocyanine, which both enhance gene expression and promoter DNA binding of BrlR. Activates expression of operons encoding the multidrug efflux pumps MexAB-OprM and MexEF-OprN and several ABC transport systems, acting by direct binding to their respective promoters. Also acts as a repressor of the two component regulatory system, PhoPQ. Binds to promoter of its own gene. Contributes to the antimicrobial tolerance exhibited by biofilms, acting, at least in part, by activating expression of multidrug efflux pumps and ABC transporters. The polypeptide is Transcriptional regulator BrlR (Pseudomonas aeruginosa (strain ATCC 15692 / DSM 22644 / CIP 104116 / JCM 14847 / LMG 12228 / 1C / PRS 101 / PAO1)).